Here is an 838-residue protein sequence, read N- to C-terminus: RNA-binding protein 5 (838 aa).

The segment at 1-86 (MGSDKRVSRS…EDGYHSDGDY (86 aa)) is disordered. The region spanning 103-183 (KTIMLRGLPI…KTIAMHYSNP (81 aa)) is the RRM 1 domain. The segment at 186–215 (KFEDWLCNKCGLYNFRRRLKCFRCGAAKAE) adopts a RanBP2-type zinc-finger fold. An RRM 2 domain is found at 242 to 326 (SAIILRNIGP…KTVGVDFAKS (85 aa)). Polar residues-rich tracts occupy residues 396–406 (QTGAAEQSTAP) and 416–439 (ATTSAVVCQSPQMYQQPGSPTQSG). Disordered regions lie at residues 396–473 (QTGA…YSVP) and 524–561 (AADGAGQSGAQPNGANAGSSKEGKEKKEKPKSKTAQQI). Positions 440–462 (TSTAANTTPASTTSTTEEAAPPN) are enriched in low complexity. Positions 531-540 (SGAQPNGANA) are enriched in polar residues. A C2H2-type zinc finger spans residues 671-696 (LACLLCRRQFPNKDALTRHQQLSDLH). Residues 766–812 (NSNIGNKMLQAMGWKEGSGLGRKSQGITAPIQAQVRMRGAGLGAKGS) enclose the G-patch domain.

The protein belongs to the RBM5/RBM10 family. Component of the spliceosome A complex (also known as the prespliceosome). Appears to dissociate from the spliceosome upon formation of the spliceosome B complex (also known as the precatalytic spliceosome), in which the heterotrimeric U4/U6.U5 snRNPs are bound.

Its subcellular location is the nucleus. Component of the spliceosome A complex. Regulates alternative splicing of a number of mRNAs. May modulate splice site pairing after recruitment of the U1 and U2 snRNPs to the 5' and 3' splice sites of the intron. This chain is RNA-binding protein 5 (rbm5), found in Xenopus tropicalis (Western clawed frog).